Consider the following 436-residue polypeptide: Homeobox protein PKNOX1 (436 aa).

The interval 24–49 (LKTEQDPNCSEPDVEGVSPPPVGSQT) is disordered. Phosphoserine occurs at positions 33 and 41. Residues 80 to 163 (GSEGTTSASF…MNSETLLSGE (84 aa)) enclose the MEIS N-terminal domain. The homeobox; TALE-type DNA-binding region spans 259–321 (SKNKRGVLPK…NARRRILQPM (63 aa)). A disordered region spans residues 401-436 (AEQSEDDSVDSTGDGGAALAPGHLGGLVLENSDSLQ).

This sequence belongs to the TALE/MEIS homeobox family. As to quaternary structure, interacts with MN1.

Its subcellular location is the nucleus. In terms of biological role, activates transcription in the presence of PBX1A and HOXA1. The protein is Homeobox protein PKNOX1 of Bos taurus (Bovine).